The sequence spans 284 residues: 2-dehydro-3-deoxyphosphooctonate aldolase (284 aa).

It belongs to the KdsA family.

It is found in the cytoplasm. It catalyses the reaction D-arabinose 5-phosphate + phosphoenolpyruvate + H2O = 3-deoxy-alpha-D-manno-2-octulosonate-8-phosphate + phosphate. Its pathway is carbohydrate biosynthesis; 3-deoxy-D-manno-octulosonate biosynthesis; 3-deoxy-D-manno-octulosonate from D-ribulose 5-phosphate: step 2/3. It functions in the pathway bacterial outer membrane biogenesis; lipopolysaccharide biosynthesis. This is 2-dehydro-3-deoxyphosphooctonate aldolase from Sodalis glossinidius (strain morsitans).